A 615-amino-acid chain; its full sequence is MAKAVGIDLGTTNSVIAVLEGGKPVVLENAEGERVTPSVVAFRDGETLVGRMAKRQAVLNPEGTIFEIKRFIGRRFEEVQEEAKRVPYKVVPGPDGGVRVEVKGKLYTPEEISAMILRKLVEDASKKLGEKITKAVITVPAYFNNAQREATANAGRIAGLEVLRIINEPTAAALAYGLDKKGNETVLVFDLGGGTFDVTVLEIGEGVFEVKATSGDTHLGGSDMDHAIVNWLAEEFKKEHGVDLKADRQALQRLIEAAEKAKIELSSTLETTISLPFIALDPASKTPLHLEKKLTRAKFEELIQPLLKRLRGPVEQALKDAGLTPAQIDEVILVGGATRVPAVQQVVRELLGKEPNRSVNPDEVVAMGAAIQAGVLMGEVRDVVLLDVTPLSLGVETKGGVMTVLIPRNTTIPTRKCEIFTTAEHNQTAVEIHVLQGERPMAQDNKSLGRFRLEGIPPMPAGVPQIEVCFDIDANGILHVTAKERSTGREASITIQNTTTLSEEEIQRIIEEAKRHAEEDRRRREHAELKNALDSARVQAERVLQERQGAPEARARLEAAIGKAKELVERDAPDPELKAATEELLKAVEEYEKGAQAASGKGPDDVIDADYKPAD.

At T195 the chain carries Phosphothreonine; by autocatalysis. The segment at 592–615 (EKGAQAASGKGPDDVIDADYKPAD) is disordered.

It belongs to the heat shock protein 70 family.

Its function is as follows. Acts as a chaperone. This chain is Chaperone protein DnaK, found in Thermus thermophilus (strain ATCC BAA-163 / DSM 7039 / HB27).